The primary structure comprises 663 residues: Shugoshin 1 (663 aa).

2 coiled-coil regions span residues 8–29 (KQAF…RIKK) and 110–132 (DTAE…NLLE). Disordered stretches follow at residues 207–250 (RNTA…MNKN), 278–401 (EHTV…LNSG), and 417–478 (FRQN…ARKN). 4 stretches are compositionally biased toward basic and acidic residues: residues 231-242 (RLEECNNEDKTE), 280-304 (TVVE…REID), 339-358 (KNKE…KAER), and 366-394 (KPWE…KEKM). Low complexity predominate over residues 427–437 (NESSLEISSSE). A compositionally biased stretch (basic and acidic residues) spans 443-453 (SLYKPYKDKSK).

This sequence belongs to the shugoshin family. As to quaternary structure, binds microtubules. In terms of processing, ubiquitinated by the anaphase promoting complex (APC) at the onset of anaphase, conducting to its degradation.

It is found in the nucleus. The protein localises to the chromosome. It localises to the centromere. The protein resides in the kinetochore. Its subcellular location is the nucleus speckle. Functionally, plays a central role in chromosome cohesion during mitosis by preventing premature dissociation of cohesin complex from centromeres after prophase, when most of cohesin complex dissociates from chromosomes arms. May act by preventing phosphorylation of the stag2 subunit of cohesin complex at the centromere, ensuring cohesin persistence at centromere until cohesin cleavage by espl1/separase at anaphase. May regulate kinetochore microtubule stability in mitosis, possibly to sense tension on mitotic chromosomes. This is Shugoshin 1 from Xenopus laevis (African clawed frog).